The chain runs to 635 residues: Threonine--tRNA ligase (635 aa).

The region spanning 1 to 61 (MINISFPDGS…DNDCKLRILT (61 aa)) is the TGS domain. Positions 242–533 (DHRKLGRELD…LIEEYAGRFP (292 aa)) are catalytic. Residues cysteine 333, histidine 384, and histidine 510 each contribute to the Zn(2+) site.

The protein belongs to the class-II aminoacyl-tRNA synthetase family. In terms of assembly, homodimer. Requires Zn(2+) as cofactor.

It is found in the cytoplasm. It catalyses the reaction tRNA(Thr) + L-threonine + ATP = L-threonyl-tRNA(Thr) + AMP + diphosphate + H(+). In terms of biological role, catalyzes the attachment of threonine to tRNA(Thr) in a two-step reaction: L-threonine is first activated by ATP to form Thr-AMP and then transferred to the acceptor end of tRNA(Thr). Also edits incorrectly charged L-seryl-tRNA(Thr). The sequence is that of Threonine--tRNA ligase from Rickettsia africae (strain ESF-5).